A 199-amino-acid chain; its full sequence is NAD(P)H dehydrogenase (quinone) (199 aa).

The region spanning 4–190 (ILVLYYSMYG…AIARFQGEHV (187 aa)) is the Flavodoxin-like domain. FMN-binding positions include 10–15 (SMYGHI) and 79–81 (TRF). Y12 is an NAD(+) binding site. W99 contacts substrate. Residues 114–119 (STGTGG) and H134 contribute to the FMN site.

The protein belongs to the WrbA family. It depends on FMN as a cofactor.

The catalysed reaction is a quinone + NADH + H(+) = a quinol + NAD(+). It carries out the reaction a quinone + NADPH + H(+) = a quinol + NADP(+). This chain is NAD(P)H dehydrogenase (quinone), found in Yersinia pseudotuberculosis serotype O:1b (strain IP 31758).